A 1085-amino-acid polypeptide reads, in one-letter code: Protein IFH1 (1085 aa).

6 disordered regions span residues 1–251 (MAGK…QQAL), 283–302 (KNKE…VMLG), 457–493 (SKLK…TSNV), 507–622 (DDEN…DSSV), 676–700 (VDDE…IGSK), and 747–774 (QLRE…GDEL). Composition is skewed to polar residues over residues 9 to 18 (KSTINHSTHS) and 39 to 48 (RQSPPTLSTT). Positions 54–66 (SLIYSSESSLSDV) are enriched in low complexity. Over residues 76-85 (NPHKIKRKAK) the composition is skewed to basic residues. Residues 120 to 165 (DGEESENEEEESEEEEEDDDEDDDDDDDDGSDSDSDSETSSDDENI) show a composition bias toward acidic residues. Over residues 184 to 197 (AMNTNSNTLYSSRE) the composition is skewed to polar residues. A Phosphoserine modification is found at serine 208. Residues 209-239 (PKKENEEEQKEEKEKEKEEQQKQQESNKKEV) are compositionally biased toward basic and acidic residues. Polar residues predominate over residues 241 to 251 (GSGTTTTQQAL). Over residues 283 to 297 (KNKENNGNEEDKLDS) the composition is skewed to basic and acidic residues. A compositionally biased stretch (basic residues) spans 474–483 (QRRKLYKKTQ). A compositionally biased stretch (polar residues) spans 484–493 (KPSTRTTSNV). Residues 513–524 (HKSKKGRHKSGK) show a composition bias toward basic residues. Residues 546–557 (STHSTVLNSGKY) are compositionally biased toward polar residues. The span at 584–599 (ETSHDADTDEELRALD) shows a compositional bias: basic and acidic residues. Composition is skewed to acidic residues over residues 607 to 620 (TELD…DDDS) and 676 to 686 (VDDESTDEDDN). Basic and acidic residues predominate over residues 747 to 764 (QLREQHQRAQTPDVKREG). Serine 1041 carries the phosphoserine modification.

Belongs to the IFH1 family.

Its subcellular location is the nucleus. Its function is as follows. Transcriptional coactivator that together with FHL1 regulates the expression of rRNA and ribosomal protein genes. Its activity is negatively regulated by environmental stress. The sequence is that of Protein IFH1 (IFH1) from Saccharomyces cerevisiae (strain ATCC 204508 / S288c) (Baker's yeast).